A 311-amino-acid polypeptide reads, in one-letter code: Aspartate carbamoyltransferase catalytic subunit (311 aa).

Residues Arg-55 and Thr-56 each coordinate carbamoyl phosphate. Lys-85 contacts L-aspartate. 3 residues coordinate carbamoyl phosphate: Arg-106, His-135, and Gln-138. L-aspartate contacts are provided by Arg-168 and Arg-230. 2 residues coordinate carbamoyl phosphate: Leu-268 and Pro-269.

Belongs to the aspartate/ornithine carbamoyltransferase superfamily. ATCase family. Heterododecamer (2C3:3R2) of six catalytic PyrB chains organized as two trimers (C3), and six regulatory PyrI chains organized as three dimers (R2).

It catalyses the reaction carbamoyl phosphate + L-aspartate = N-carbamoyl-L-aspartate + phosphate + H(+). It functions in the pathway pyrimidine metabolism; UMP biosynthesis via de novo pathway; (S)-dihydroorotate from bicarbonate: step 2/3. Functionally, catalyzes the condensation of carbamoyl phosphate and aspartate to form carbamoyl aspartate and inorganic phosphate, the committed step in the de novo pyrimidine nucleotide biosynthesis pathway. The chain is Aspartate carbamoyltransferase catalytic subunit from Salmonella arizonae (strain ATCC BAA-731 / CDC346-86 / RSK2980).